Reading from the N-terminus, the 360-residue chain is Protein Wnt-2 (360 aa).

A signal peptide spans 1-37 (MIPRRSCWLILLLNLLNVQSLLDASWWSTVAQLSTAL). Cystine bridges form between cysteine 80/cysteine 91, cysteine 130/cysteine 138, cysteine 140/cysteine 158, cysteine 213/cysteine 227, cysteine 215/cysteine 222, cysteine 289/cysteine 320, cysteine 305/cysteine 315, cysteine 319/cysteine 359, cysteine 335/cysteine 350, cysteine 337/cysteine 347, and cysteine 342/cysteine 343. Residue asparagine 90 is glycosylated (N-linked (GlcNAc...) asparagine). Serine 219 carries O-palmitoleoyl serine; by mom-1 lipidation. Residue asparagine 352 is glycosylated (N-linked (GlcNAc...) asparagine).

The protein belongs to the Wnt family. Palmitoleoylation is required for efficient binding to frizzled receptors. Depalmitoleoylation leads to Wnt signaling pathway inhibition. Expressed in intestine, pharynx, anterior body wall muscle, vulva, some pharyngeal neurons and SMD head neurons. Expressed along the boundary between the intestine and muscle or hypodermis, but is also expressed in the hypodermis in cells including seam cells.

The protein resides in the secreted. Its subcellular location is the extracellular space. It is found in the extracellular matrix. In terms of biological role, ligand for members of the frizzled family of seven transmembrane receptors. Probable developmental protein. May be a signaling molecule which affects the development of discrete regions of tissues. Is likely to signal over only few cell diameters. Involved in the correct positioning of the developing nerve ring and in axon guidance of SIA and SIB neurons, probably by binding to tyrosine kinase receptor cam-1. In addition, regulates the positioning of some head neuronal cells, muscle arms associated with the nerve ring and the excretory pore. Together with Wnt ligand cwn-1, regulates the migration of CAN, ALM, BDU and HSN neurons during embryogenesis, the migration of QL and QR neuroblast descendants during larval development, and polarity of ALM neurons. May act through the wnt receptor cfz-2 to regulate QR neuroblast descendant migration, and to direct ALM migration. Also plays a role in axon growth and guidance in HSN and male CP neurons. In addition, together with wnt ligand cwn-1, negatively regulates developmental neurite pruning of AIM neurons probably by acting as a ligand for receptor tyrosine kinase cam-1. Through the cam-1 receptor also probably regulates the outgrowth of neurites from RME GABAergic motor neurons. May act redundantly with other Wnt ligands such as cwn-1 and mom-2 to control seam cell polarity. The protein is Protein Wnt-2 of Caenorhabditis elegans.